The chain runs to 117 residues: Large ribosomal subunit protein bL19 (117 aa).

The protein belongs to the bacterial ribosomal protein bL19 family.

Its function is as follows. This protein is located at the 30S-50S ribosomal subunit interface and may play a role in the structure and function of the aminoacyl-tRNA binding site. The sequence is that of Large ribosomal subunit protein bL19 from Sorangium cellulosum (strain So ce56) (Polyangium cellulosum (strain So ce56)).